Consider the following 860-residue polypeptide: Probable leucine--tRNA ligase, cytoplasmic (860 aa).

Residues 41-51 (PYMNGKLHLGH) carry the 'HIGH' region motif. The 'KMSKS' region motif lies at 552–556 (KMSKS). Lysine 555 contributes to the ATP binding site.

Belongs to the class-I aminoacyl-tRNA synthetase family.

The protein resides in the cytoplasm. It catalyses the reaction tRNA(Leu) + L-leucine + ATP = L-leucyl-tRNA(Leu) + AMP + diphosphate. In Enterocytozoon bieneusi (strain H348) (Microsporidian parasite), this protein is Probable leucine--tRNA ligase, cytoplasmic.